We begin with the raw amino-acid sequence, 273 residues long: Dermonecrotic toxin LhSicTox-alphaIA2bvi (273 aa).

Histidine 5 is a catalytic residue. Residues glutamate 25 and aspartate 27 each contribute to the Mg(2+) site. The Nucleophile role is filled by histidine 41. 2 disulfide bridges follow: cysteine 45–cysteine 51 and cysteine 47–cysteine 190. Aspartate 85 contacts Mg(2+).

Belongs to the arthropod phospholipase D family. Class II subfamily. Mg(2+) serves as cofactor. In terms of tissue distribution, expressed by the venom gland.

It is found in the secreted. It carries out the reaction an N-(acyl)-sphingosylphosphocholine = an N-(acyl)-sphingosyl-1,3-cyclic phosphate + choline. The enzyme catalyses an N-(acyl)-sphingosylphosphoethanolamine = an N-(acyl)-sphingosyl-1,3-cyclic phosphate + ethanolamine. It catalyses the reaction a 1-acyl-sn-glycero-3-phosphocholine = a 1-acyl-sn-glycero-2,3-cyclic phosphate + choline. The catalysed reaction is a 1-acyl-sn-glycero-3-phosphoethanolamine = a 1-acyl-sn-glycero-2,3-cyclic phosphate + ethanolamine. Dermonecrotic toxins cleave the phosphodiester linkage between the phosphate and headgroup of certain phospholipids (sphingolipid and lysolipid substrates), forming an alcohol (often choline) and a cyclic phosphate. This toxin acts on sphingomyelin (SM). It may also act on ceramide phosphoethanolamine (CPE), lysophosphatidylcholine (LPC) and lysophosphatidylethanolamine (LPE), but not on lysophosphatidylserine (LPS), and lysophosphatidylglycerol (LPG). It acts by transphosphatidylation, releasing exclusively cyclic phosphate products as second products. Induces dermonecrosis, hemolysis, increased vascular permeability, edema, inflammatory response, and platelet aggregation. The sequence is that of Dermonecrotic toxin LhSicTox-alphaIA2bvi from Loxosceles hirsuta (Recluse spider).